The primary structure comprises 145 residues: D-aminoacyl-tRNA deacylase (145 aa).

A Gly-cisPro motif, important for rejection of L-amino acids motif is present at residues 133–134 (GP).

This sequence belongs to the DTD family. In terms of assembly, homodimer.

Its subcellular location is the cytoplasm. It carries out the reaction glycyl-tRNA(Ala) + H2O = tRNA(Ala) + glycine + H(+). The catalysed reaction is a D-aminoacyl-tRNA + H2O = a tRNA + a D-alpha-amino acid + H(+). An aminoacyl-tRNA editing enzyme that deacylates mischarged D-aminoacyl-tRNAs. Also deacylates mischarged glycyl-tRNA(Ala), protecting cells against glycine mischarging by AlaRS. Acts via tRNA-based rather than protein-based catalysis; rejects L-amino acids rather than detecting D-amino acids in the active site. By recycling D-aminoacyl-tRNA to D-amino acids and free tRNA molecules, this enzyme counteracts the toxicity associated with the formation of D-aminoacyl-tRNA entities in vivo and helps enforce protein L-homochirality. The sequence is that of D-aminoacyl-tRNA deacylase from Cutibacterium acnes (strain DSM 16379 / KPA171202) (Propionibacterium acnes).